Reading from the N-terminus, the 255-residue chain is MSQKKAPLFEIRSGTVDALLLSPRTADMDALAAELTRRFADTPEFFSNDVIAIDVRRLAADERLPIDRLVETLTGLRARAIGVVASPEQAEWAQACGLPLLDSHGRRPRGERSEEAAEAVPAAAEPVPAPAASPAPPVEAVAMQPGAMIIEKPLRSGQRVYARGDLVVLDLVSDGAEVIAEGNIYVYASLRGRALAGVKGNLDARIFCTCLEPQLISIAGIYRTGETPWPEAFASKPAQIRLSENTLVLEPLRMK.

A compositionally biased stretch (basic and acidic residues) spans 103–115; it reads SHGRRPRGERSEE. Positions 103-136 are disordered; sequence SHGRRPRGERSEEAAEAVPAAAEPVPAPAASPAP. The span at 127–136 shows a compositional bias: pro residues; that stretch reads VPAPAASPAP.

This sequence belongs to the MinC family. Interacts with MinD and FtsZ.

In terms of biological role, cell division inhibitor that blocks the formation of polar Z ring septums. Rapidly oscillates between the poles of the cell to destabilize FtsZ filaments that have formed before they mature into polar Z rings. Prevents FtsZ polymerization. The chain is Probable septum site-determining protein MinC from Ralstonia nicotianae (strain ATCC BAA-1114 / GMI1000) (Ralstonia solanacearum).